We begin with the raw amino-acid sequence, 443 residues long: Tryptophan synthase beta chain (443 aa).

Lys-110 is modified (N6-(pyridoxal phosphate)lysine).

This sequence belongs to the TrpB family. Tetramer of two alpha and two beta chains. The cofactor is pyridoxal 5'-phosphate.

The catalysed reaction is (1S,2R)-1-C-(indol-3-yl)glycerol 3-phosphate + L-serine = D-glyceraldehyde 3-phosphate + L-tryptophan + H2O. Its pathway is amino-acid biosynthesis; L-tryptophan biosynthesis; L-tryptophan from chorismate: step 5/5. In terms of biological role, the beta subunit is responsible for the synthesis of L-tryptophan from indole and L-serine. The protein is Tryptophan synthase beta chain of Thermococcus onnurineus (strain NA1).